We begin with the raw amino-acid sequence, 150 residues long: Molybdopterin synthase catalytic subunit (150 aa).

Substrate is bound by residues Lys37–Arg39, His103–Arg104, Lys119, and Lys126–Glu128. Residue Lys119 forms a Glycyl lysine isopeptide (Lys-Gly) (interchain with G-Cter in MoaD) linkage.

It belongs to the MoaE family. As to quaternary structure, heterotetramer of 2 MoaD subunits and 2 MoaE subunits. Also stable as homodimer. The enzyme changes between these two forms during catalysis.

It carries out the reaction 2 [molybdopterin-synthase sulfur-carrier protein]-C-terminal-Gly-aminoethanethioate + cyclic pyranopterin phosphate + H2O = molybdopterin + 2 [molybdopterin-synthase sulfur-carrier protein]-C-terminal Gly-Gly + 2 H(+). It participates in cofactor biosynthesis; molybdopterin biosynthesis. Functionally, converts molybdopterin precursor Z to molybdopterin. This requires the incorporation of two sulfur atoms into precursor Z to generate a dithiolene group. The sulfur is provided by MoaD. This Escherichia coli (strain K12) protein is Molybdopterin synthase catalytic subunit (moaE).